The following is a 224-amino-acid chain: MSPAFNASPNQLTLALSKGRIFTETLPLLEAAGIRVTEDPETSRKLILPTSDPAVRVVIVRASDVPTYVQYGAADFGVAGKDVLMENGMAGLYAPIDLNIARCRMSVAVPAGFDYANAVRQGARLAVATKYVQTAREHFAKKGVHVDLIKLYGSMELGPLVGLSDAIVDLVSTGSTLRANNLVEVEEIVQISSRLVVNQAALKLKRERLAPILDAFERASAALA.

It belongs to the ATP phosphoribosyltransferase family. Short subfamily. As to quaternary structure, heteromultimer composed of HisG and HisZ subunits.

It localises to the cytoplasm. It catalyses the reaction 1-(5-phospho-beta-D-ribosyl)-ATP + diphosphate = 5-phospho-alpha-D-ribose 1-diphosphate + ATP. Its pathway is amino-acid biosynthesis; L-histidine biosynthesis; L-histidine from 5-phospho-alpha-D-ribose 1-diphosphate: step 1/9. Catalyzes the condensation of ATP and 5-phosphoribose 1-diphosphate to form N'-(5'-phosphoribosyl)-ATP (PR-ATP). Has a crucial role in the pathway because the rate of histidine biosynthesis seems to be controlled primarily by regulation of HisG enzymatic activity. This Cupriavidus taiwanensis (strain DSM 17343 / BCRC 17206 / CCUG 44338 / CIP 107171 / LMG 19424 / R1) (Ralstonia taiwanensis (strain LMG 19424)) protein is ATP phosphoribosyltransferase.